Consider the following 158-residue polypeptide: Large ribosomal subunit protein uL13 (158 aa).

A disordered region spans residues 129–158 (PEHGHHAQKPVALDFGAMNNKNGRGNNAGR). The segment covering 144-158 (GAMNNKNGRGNNAGR) has biased composition (low complexity).

This sequence belongs to the universal ribosomal protein uL13 family. Part of the 50S ribosomal subunit.

In terms of biological role, this protein is one of the early assembly proteins of the 50S ribosomal subunit, although it is not seen to bind rRNA by itself. It is important during the early stages of 50S assembly. In Anaplasma phagocytophilum (strain HZ), this protein is Large ribosomal subunit protein uL13.